The following is a 46-amino-acid chain: Thymosin beta-a (46 aa).

The segment covering 21–30 has biased composition (polar residues); it reads TNTAEKNTLP. Positions 21–46 are disordered; it reads TNTAEKNTLPTKEDIDQEKKAAEGGK. Basic and acidic residues predominate over residues 31–46; the sequence is TKEDIDQEKKAAEGGK.

The protein belongs to the thymosin beta family.

It is found in the cytoplasm. It localises to the cytoskeleton. Plays an important role in the organization of the cytoskeleton. Binds to and sequesters actin monomers (G actin) and therefore inhibits actin polymerization. The protein is Thymosin beta-a of Cyprinus carpio (Common carp).